The sequence spans 403 residues: GTPase Obg (403 aa).

The region spanning 1 to 159 is the Obg domain; sequence MKFIDESLIR…RDLLLELMLL (159 aa). Positions 160-333 constitute an OBG-type G domain; the sequence is ADVGMLGFPN…LCRDIMDFII (174 aa). Residues 166 to 173, 191 to 195, 213 to 216, 283 to 286, and 314 to 316 each bind GTP; these read GFPNAGKS, FTTLV, DIPG, NKID, and SAA. Mg(2+)-binding residues include Ser-173 and Thr-193. Positions 363–403 are disordered; that stretch reads EYQFDDDEDWDDDWTEEDDDEDWDDDWTEEDDEGIEFIYKP. A compositionally biased stretch (acidic residues) spans 365-397; the sequence is QFDDDEDWDDDWTEEDDDEDWDDDWTEEDDEGI.

It belongs to the TRAFAC class OBG-HflX-like GTPase superfamily. OBG GTPase family. Monomer. Mg(2+) is required as a cofactor.

The protein resides in the cytoplasm. Functionally, an essential GTPase which binds GTP, GDP and possibly (p)ppGpp with moderate affinity, with high nucleotide exchange rates and a fairly low GTP hydrolysis rate. Plays a role in control of the cell cycle, stress response, ribosome biogenesis and in those bacteria that undergo differentiation, in morphogenesis control. The polypeptide is GTPase Obg (Haemophilus influenzae (strain PittEE)).